The primary structure comprises 264 residues: Apolipoprotein A-I (264 aa).

The signal sequence occupies residues 1 to 18; that stretch reads MKAVVLAVAVLFLTGSQA. A run of 2 repeats spans residues 67 to 88 and 89 to 110. Positions 67–264 are 10 X approximate tandem repeats; the sequence is LKLVDNWDTV…DETSKRLSTQ (198 aa). M109 carries the methionine sulfoxide modification. Residues 111-121 form a 3; half-length repeat; that stretch reads KDLEEVKKQVQ. Tandem repeats lie at residues 122 to 143, 144 to 165, and 166 to 187. A 7; truncated repeat occupies 188–207; the sequence is PYSDKMRERLAQHLAKLKDS. M193 is subject to Methionine sulfoxide. Repeat unit 8 spans residues 208–229; it reads TTLAEYRTKASNHLQTLSEKAK. A 9; half-length repeat occupies 230–240; it reads PALEDLRQGLT. Residues 241–264 form repeat 10; that stretch reads PMLESFRATIMGWIDETSKRLSTQ. M242 carries the post-translational modification Methionine sulfoxide.

It belongs to the apolipoprotein A1/A4/E family. In terms of assembly, homodimer. Interacts with APOA1BP and CLU. Component of a sperm activating protein complex (SPAP), consisting of APOA1, an immunoglobulin heavy chain, an immunoglobulin light chain and albumin. Interacts with NDRG1. Interacts with SCGB3A2. Interacts with NAXE and YJEFN3. Glycosylated. In terms of processing, palmitoylated. Post-translationally, phosphorylation sites are present in the extracellular medium.

Its subcellular location is the secreted. Participates in the reverse transport of cholesterol from tissues to the liver for excretion by promoting cholesterol efflux from tissues and by acting as a cofactor for the lecithin cholesterol acyltransferase (LCAT). As part of the SPAP complex, activates spermatozoa motility. This is Apolipoprotein A-I (Apoa1) from Peromyscus maniculatus bairdii (Prairie deer mouse).